Here is a 385-residue protein sequence, read N- to C-terminus: ELAV-like protein 4 (385 aa).

The tract at residues 12 to 48 (TMEPQVSNGPTSNTSNGPSSNNRNCPSPMQTGAATDD) is disordered. Low complexity predominate over residues 18–33 (SNGPTSNTSNGPSSNN). The span at 34 to 44 (RNCPSPMQTGA) shows a compositional bias: polar residues. At serine 38 the chain carries Phosphoserine. RRM domains lie at 51-129 (TNLI…YARP) and 137-217 (ANLY…FANN). A Phosphoserine modification is found at serine 233. Arginine 248 bears the Asymmetric dimethylarginine; by CARM1; alternate mark. The residue at position 248 (arginine 248) is an Omega-N-methylarginine; by CARM1; alternate. Positions 302-380 (WCIFVYNLSP…RVLQVSFKTN (79 aa)) constitute an RRM 3 domain.

Belongs to the RRM elav family. In terms of assembly, component of a TAU mRNP complex, at least composed of IGF2BP1, ELAVL4 and G3BP. Associates with the EIF4F cap-binding complex, composed of EIF4G, EIF4A, EIF4E and PABP. Within the EIF4F cap-binding complex, interacts with EIF4A. Interacts with SMN (via Tudor domain) in an RNA-independent manner; the interaction is required for localization of ELAVL4 to RNA granules. Interacts with MAP1 light chain LC1 (via C-terminus); the interaction contributes to the association of ELAVL4 with microtubules. Interacts with MAP1 light chain LC2. Methylated by CARM1, which leads to reduced RNA-binding activity and enhanced interaction with SMN. Methylation at Arg-248 by CARM1 weakens protective binding to the 3'UTR of CDKN1A mRNA and down-regulates CDKN1A protein expression, thereby maintaining cells in a proliferative state. Methylation is inhibited by NGF, which facilitates neurite outgrowth. Expressed in the brain, including the hippocampus, and in pancreatic beta cells (at protein level). Expressed in pyramidal neurons of the hippocampal CA3 and CA1 region and in the hilus but not in dentate granule cells (at protein level). Expressed in the dorsal root ganglion and the spinal cord (at protein level). Expressed in neural stem and progenitor cells (at protein level). Expressed in radial glia-like cells and in transient amplifying cells in the subventricular zone (SVZ), and in immature neurons both in the SVZ and the rostral migratory stream as well as in mature neurons in the olfactory bulb (at protein level). Expressed in testis and in the brain, including the hippocampus, the neocortex and the cerebellum. Expressed in lower- but not upper-layer primary neurons of the mature neocortex, in the hippocampal regions CA1-3 and the dentate gyrus. Expressed in the mitral and granule cells of the olfactory bulb, cerebral cortex, entorhinal cortex, thalamus, medial habenula, amygdala, granule cells of the cerebellum, pons, olivary nucleus, dorsal and ventral spinal cord and in dorsal root ganglia. Expressed in motor neurons. Isoform 4: Expressed in the brain. Isoform 5: Expressed in the brain. Isoform 6: Expressed in the brain. Isoform 7: Expressed in the brain. Isoform 8: Expressed in the brain. Isoform 9: Expressed in the brain. Isoform 10: Expressed in the brain. Isoform 11: Expressed in the brain.

It is found in the cytoplasm. The protein localises to the perikaryon. Its subcellular location is the cell projection. It localises to the dendrite. The protein resides in the axon. It is found in the growth cone. In terms of biological role, RNA-binding protein that is involved in the post-transcriptional regulation of mRNAs. Plays a role in the regulation of mRNA stability, alternative splicing and translation. Binds to AU-rich element (ARE) sequences in the 3' untranslated region (3'UTR) of target mRNAs, including GAP43, VEGF, FOS, CDKN1A and ACHE mRNA. Many of the target mRNAs are coding for RNA-binding proteins, transcription factors and proteins involved in RNA processing and/or neuronal development and function. By binding to the mRNA 3'UTR, decreases mRNA deadenylation and thereby contributes to the stabilization of mRNA molecules and their protection from decay. Also binds to the polyadenylated (poly(A)) tail in the 3'UTR of mRNA, thereby increasing its affinity for mRNA binding. Mainly plays a role in neuron-specific RNA processing by stabilization of mRNAs such as GAP43, ACHE and mRNAs of other neuronal proteins, thereby contributing to the differentiation of neural progenitor cells, nervous system development, learning and memory mechanisms. Involved in the negative regulation of the proliferative activity of neuronal stem cells and in the positive regulation of neuronal differentiation of neural progenitor cells. Promotes neuronal differentiation of neural stem/progenitor cells in the adult subventricular zone of the hippocampus by binding to and stabilizing SATB1 mRNA. Binds and stabilizes MSI1 mRNA in neural stem cells. Exhibits increased binding to ACHE mRNA during neuronal differentiation, thereby stabilizing ACHE mRNA and enhancing its expression. Protects CDKN1A mRNA from decay by binding to its 3'-UTR. May bind to APP and BACE1 mRNAS and the BACE1AS lncRNA and enhance their stabilization. Plays a role in neurite outgrowth and in the establishment and maturation of dendritic arbors, thereby contributing to neocortical and hippocampal circuitry function. Stabilizes GAP43 mRNA and protects it from decay during postembryonic development in the brain. By promoting the stabilization of GAP43 mRNA, plays a role in NGF-mediated neurite outgrowth. Binds to BDNF long 3'UTR mRNA, thereby leading to its stabilization and increased dendritic translation after activation of PKC. By increasing translation of BDNF after nerve injury, may contribute to nerve regeneration. Acts as a stabilizing factor by binding to the 3'UTR of NOVA1 mRNA, thereby increasing its translation and enhancing its functional activity in neuron-specific splicing. Stimulates translation of mRNA in a poly(A)- and cap-dependent manner, possibly by associating with the EIF4F cap-binding complex. May also negatively regulate translation by binding to the 5'UTR of Ins2 mRNA, thereby repressing its translation. Upon glucose stimulation, Ins2 mRNA is released from ELAVL4 and translational inhibition is abolished. Also plays a role in the regulation of alternative splicing. May regulate alternative splicing of CALCA pre-mRNA into Calcitonin and Calcitonin gene-related peptide 1 (CGRP) by competing with splicing regulator TIAR for binding to U-rich sequences of CALCA pre-mRNA. This is ELAV-like protein 4 (Elavl4) from Mus musculus (Mouse).